The primary structure comprises 169 residues: Peptide methionine sulfoxide reductase MsrA (169 aa).

Residue C13 is part of the active site.

Belongs to the MsrA Met sulfoxide reductase family.

It catalyses the reaction L-methionyl-[protein] + [thioredoxin]-disulfide + H2O = L-methionyl-(S)-S-oxide-[protein] + [thioredoxin]-dithiol. It carries out the reaction [thioredoxin]-disulfide + L-methionine + H2O = L-methionine (S)-S-oxide + [thioredoxin]-dithiol. Has an important function as a repair enzyme for proteins that have been inactivated by oxidation. Catalyzes the reversible oxidation-reduction of methionine sulfoxide in proteins to methionine. The chain is Peptide methionine sulfoxide reductase MsrA from Mycolicibacterium vanbaalenii (strain DSM 7251 / JCM 13017 / BCRC 16820 / KCTC 9966 / NRRL B-24157 / PYR-1) (Mycobacterium vanbaalenii).